Consider the following 324-residue polypeptide: Methionyl-tRNA formyltransferase (324 aa).

S114–P117 is a binding site for (6S)-5,6,7,8-tetrahydrofolate.

It belongs to the Fmt family.

The catalysed reaction is L-methionyl-tRNA(fMet) + (6R)-10-formyltetrahydrofolate = N-formyl-L-methionyl-tRNA(fMet) + (6S)-5,6,7,8-tetrahydrofolate + H(+). Its function is as follows. Attaches a formyl group to the free amino group of methionyl-tRNA(fMet). The formyl group appears to play a dual role in the initiator identity of N-formylmethionyl-tRNA by promoting its recognition by IF2 and preventing the misappropriation of this tRNA by the elongation apparatus. This Phocaeicola vulgatus (strain ATCC 8482 / DSM 1447 / JCM 5826 / CCUG 4940 / NBRC 14291 / NCTC 11154) (Bacteroides vulgatus) protein is Methionyl-tRNA formyltransferase.